Consider the following 810-residue polypeptide: Calpain-3 (810 aa).

Positions 9-27 (VAQQTAAGSVPSTTSTTTE) are enriched in low complexity. Residues 9-31 (VAQQTAAGSVPSTTSTTTEGTGG) are disordered. The region spanning 68-410 (LYEDPDFPPN…FTKLEICNLT (343 aa)) is the Calpain catalytic domain. Residues C123, H327, and N351 contribute to the active site. The domain III stretch occupies residues 411–579 (PDTLEADKLQ…KRSLSEEVEN (169 aa)). Residues 578 to 639 (ENMIEADRPS…SAKAREKSEE (62 aa)) form a disordered region. Positions 580 to 638 (MIEADRPSKKKKGKPIIFVSDRANSNKELTTDEDAGKDGEKTHVDEKKRSSAKAREKSE) are linker. A compositionally biased stretch (basic and acidic residues) spans 613-639 (DAGKDGEKTHVDEKKRSSAKAREKSEE). EF-hand domains follow at residues 638 to 672 (EEETQFRNIFRQIAGDDMEICREELRNVLNNVVKK), 681 to 714 (FELESSRSMIALMDTDGSGKINFDEFRHLWDKIK), 711 to 746 (DKIKSWQKIFKHYDADHSGTINSYEMRNAVKDAGFR), and 776 to 810 (VRLDAMFRAFHAFDKDGDGIIKLNVLEWLQLTMYA). The domain IV stretch occupies residues 639–809 (EETQFRNIFR…VLEWLQLTMY (171 aa)). The Ca(2+) site is built by A651, D654, E656, E661, D694, D696, S698, K700, E705, D724, D726, S728, T730, E735, D789, D791, D793, and I795.

The protein belongs to the peptidase C2 family. As to quaternary structure, homodimer; via EF-hand domain 4. Interacts with TTN/titin. Interacts with CMYA5; this interaction, which results in CMYA5 proteolysis, may protect CAPN3 from autolysis. Interacts with SIMC1. Interacts with UTP25; the interaction is required for CAPN3 translocation to the nucleolus. As to expression, skeletal muscle. Low levels in spleen, intestine and bone.

The protein resides in the cytoplasm. Its subcellular location is the nucleus. It localises to the nucleolus. The enzyme catalyses Broad endopeptidase activity.. Its activity is regulated as follows. Activated by micromolar concentrations of calcium and inhibited by calpastatin. Its function is as follows. Calcium-regulated non-lysosomal thiol-protease. Proteolytically cleaves CTBP1. Mediates, with UTP25, the proteasome-independent degradation of p53/TP53. The protein is Calpain-3 (CAPN3) of Gallus gallus (Chicken).